The primary structure comprises 316 residues: Pantothenate kinase (316 aa).

ATP is bound at residue Gly-95–Ser-102.

It belongs to the prokaryotic pantothenate kinase family.

The protein resides in the cytoplasm. The enzyme catalyses (R)-pantothenate + ATP = (R)-4'-phosphopantothenate + ADP + H(+). It functions in the pathway cofactor biosynthesis; coenzyme A biosynthesis; CoA from (R)-pantothenate: step 1/5. The chain is Pantothenate kinase from Shigella boydii serotype 18 (strain CDC 3083-94 / BS512).